A 424-amino-acid polypeptide reads, in one-letter code: Hemagglutinin-esterase (424 aa).

The signal sequence occupies residues 1 to 16 (MFLLPRFVLVSCIIGS). Residues 7–127 (FVLVSCIIGS…SNDIWMQNKG (121 aa)) form an esterase domain 1 region. Topologically, residues 17–392 (LGFDNPPTNV…PICVYDPLPI (376 aa)) are virion surface. Serine 40 serves as the catalytic Nucleophile. A disulfide bond links cysteine 44 and cysteine 65. N-linked (GlcNAc...) asparagine; by host glycosylation is found at asparagine 54, asparagine 89, asparagine 153, asparagine 236, and asparagine 301. Disulfide bonds link cysteine 113–cysteine 162, cysteine 197–cysteine 276, and cysteine 205–cysteine 249. The receptor binding stretch occupies residues 128 to 266 (LFYTQVYKNM…GNYLAISNEL (139 aa)). The interval 267–379 (LLTVPTKAIC…RCPTAADINT (113 aa)) is esterase domain 2. Cysteine 307 and cysteine 312 form a disulfide bridge. Asparagine 316 carries an N-linked (GlcNAc...) asparagine; by host glycan. Catalysis depends on charge relay system residues aspartate 326 and histidine 329. The cysteines at positions 347 and 371 are disulfide-linked. N-linked (GlcNAc...) asparagine; by host glycosylation occurs at asparagine 358. A helical transmembrane segment spans residues 393–413 (ILLGILLSVAVIIIVVLLLYF). Residues 414 to 424 (MVDNGTRLHDA) are Intravirion-facing. The N-linked (GlcNAc...) asparagine; by host glycan is linked to asparagine 417.

This sequence belongs to the influenza type C/coronaviruses hemagglutinin-esterase family. Homodimer; disulfide-linked. Forms a complex with the M protein in the pre-Golgi. Associates then with S-M complex to form a ternary complex S-M-HE. In terms of processing, N-glycosylated in the host RER.

It localises to the virion membrane. Its subcellular location is the host cell membrane. The enzyme catalyses N-acetyl-9-O-acetylneuraminate + H2O = N-acetylneuraminate + acetate + H(+). The catalysed reaction is N-acetyl-4-O-acetylneuraminate + H2O = N-acetylneuraminate + acetate + H(+). Structural protein that makes short spikes at the surface of the virus. Contains receptor binding and receptor-destroying activities. Mediates de-O-acetylation of N-acetyl-4-O-acetylneuraminic acid, which is probably the receptor determinant recognized by the virus on the surface of erythrocytes and susceptible cells. This receptor-destroying activity is important for virus release as it probably helps preventing self-aggregation and ensures the efficient spread of the progeny virus from cell to cell. May serve as a secondary viral attachment protein for initiating infection, the spike protein being the major one. May become a target for both the humoral and the cellular branches of the immune system. The sequence is that of Hemagglutinin-esterase from Bos taurus (Bovine).